We begin with the raw amino-acid sequence, 832 residues long: FAST kinase domain-containing protein 1, mitochondrial (832 aa).

Positions 765–825 constitute an RAP domain; it reads VAIEFLDSKA…KDAWIDYLRK (61 aa).

Belongs to the FAST kinase family.

It is found in the mitochondrion. In terms of biological role, may regulate the stability of some mitochondrial mRNA species. This Xenopus tropicalis (Western clawed frog) protein is FAST kinase domain-containing protein 1, mitochondrial (fastkd1).